Reading from the N-terminus, the 706-residue chain is MNSLFASTARGLEELLKSELEALGAHDCKIVQGGVHFQGDDRLMYQSLLWSRLASRILLPLNDFKVYSDLDLYLGVQAIDWPSIFGVDKTFAVHFSGVNDEIRNSQYGALKVKDAIVDSFTRKLDQRPTVAKQQPDIRVNVFLQRDMASVALDLSGEGLHQRGYRDLTGQAPLKENLAAAIIQRSGWQLGTPMADPMCGSGTLLIEAAMMASDRAPGLHREHWGFTAWNAFNQELWRELTTEAQVRARRGLQETTSRFFGSDIDRRVIEMARANARRAGVAELITFNANDVSKLVNPLPEGPVGTVISNPPYGERLDSEPALIALHNMLGRIMKASFGGWRLSLFSASPELLSCLQLRAEREFKAKNGPLDCVQKNYQLAANPQGAVGVQVAEDYANRLRKNVKKLDKWAKQQGIECYRLYDADLPDYNVAVDRYGSKVVVQEYAPPKTIDAQKARQRLFDVINATLAVLNLPSNQLVLKTRERQKGKNQYEKLAQKGEFLLVSEYNAKLWVNLTDYLDTGLFLDHRIARQMLGKMSQGKDFLNLFAYTGTASVHAGLGGARSTTTVDMSRTYLEWAEKNLRANGLTGQQHRLIQADCLSWLSNTDEQFDVIFIDPPTFSNSKRMETTFDVQRDHLVLMKELKRLLRRKGTIMFSNNKRGFQMDLDGIKALGLEAKEITAQTQSEDFARNRQIHNCWLVTHSHEEK.

The THUMP domain occupies 43–154; that stretch reads LMYQSLLWSR…RDMASVALDL (112 aa).

It belongs to the methyltransferase superfamily. RlmKL family.

Its subcellular location is the cytoplasm. The catalysed reaction is guanosine(2445) in 23S rRNA + S-adenosyl-L-methionine = N(2)-methylguanosine(2445) in 23S rRNA + S-adenosyl-L-homocysteine + H(+). The enzyme catalyses guanosine(2069) in 23S rRNA + S-adenosyl-L-methionine = N(2)-methylguanosine(2069) in 23S rRNA + S-adenosyl-L-homocysteine + H(+). Specifically methylates the guanine in position 2445 (m2G2445) and the guanine in position 2069 (m7G2069) of 23S rRNA. This chain is Ribosomal RNA large subunit methyltransferase K/L, found in Yersinia enterocolitica serotype O:8 / biotype 1B (strain NCTC 13174 / 8081).